We begin with the raw amino-acid sequence, 797 residues long: Xaa-Pro dipeptidyl-peptidase (797 aa).

Active-site charge relay system residues include S370, D490, and H521.

This sequence belongs to the peptidase S15 family. Homodimer.

The protein localises to the cytoplasm. The catalysed reaction is Hydrolyzes Xaa-Pro-|- bonds to release unblocked, N-terminal dipeptides from substrates including Ala-Pro-|-p-nitroanilide and (sequentially) Tyr-Pro-|-Phe-Pro-|-Gly-Pro-|-Ile.. Its function is as follows. Removes N-terminal dipeptides sequentially from polypeptides having unsubstituted N-termini provided that the penultimate residue is proline. The chain is Xaa-Pro dipeptidyl-peptidase from Lacticaseibacillus rhamnosus (Lactobacillus rhamnosus).